Consider the following 166-residue polypeptide: uncharacterized protein (166 aa).

4Fe-4S ferredoxin-type domains follow at residues 3–33 (MKKIIMTNFNCDNCGDCVKACMEKNKVGRIA), 37–67 (KDGKYIPIVCQHCASAPCKEVCPVSAIEHKD), and 68–97 (GYVYLNEDVCIGCGLCALACPFGAILMEDK). Residues cysteine 13, cysteine 16, cysteine 19, cysteine 23, cysteine 46, cysteine 49, cysteine 54, cysteine 58, cysteine 77, cysteine 80, cysteine 83, cysteine 87, cysteine 101, cysteine 104, cysteine 111, and cysteine 115 each contribute to the [4Fe-4S] cluster site.

Requires [4Fe-4S] cluster as cofactor.

This is an uncharacterized protein from Methanocaldococcus jannaschii (strain ATCC 43067 / DSM 2661 / JAL-1 / JCM 10045 / NBRC 100440) (Methanococcus jannaschii).